The sequence spans 341 residues: Biotin synthase (341 aa).

Residues 40–264 (NSVKLNYLVN…VAPRSELRIA (225 aa)) form the Radical SAM core domain. Positions 55, 59, and 62 each coordinate [4Fe-4S] cluster. [2Fe-2S] cluster-binding residues include C99, C132, C192, and R262. Residues 317-341 (ASAPQGGVEPVLRKRGAGTELQPNA) are disordered.

It belongs to the radical SAM superfamily. Biotin synthase family. As to quaternary structure, homodimer. [4Fe-4S] cluster serves as cofactor. The cofactor is [2Fe-2S] cluster.

It carries out the reaction (4R,5S)-dethiobiotin + (sulfur carrier)-SH + 2 reduced [2Fe-2S]-[ferredoxin] + 2 S-adenosyl-L-methionine = (sulfur carrier)-H + biotin + 2 5'-deoxyadenosine + 2 L-methionine + 2 oxidized [2Fe-2S]-[ferredoxin]. It participates in cofactor biosynthesis; biotin biosynthesis; biotin from 7,8-diaminononanoate: step 2/2. In terms of biological role, catalyzes the conversion of dethiobiotin (DTB) to biotin by the insertion of a sulfur atom into dethiobiotin via a radical-based mechanism. In Renibacterium salmoninarum (strain ATCC 33209 / DSM 20767 / JCM 11484 / NBRC 15589 / NCIMB 2235), this protein is Biotin synthase.